We begin with the raw amino-acid sequence, 606 residues long: Phosphoenolpyruvate carboxykinase [GTP] (606 aa).

Substrate contacts are provided by residues arginine 79 and 218 to 220 (YGG). Mn(2+) contacts are provided by lysine 227 and histidine 247. Serine 269 contributes to the substrate binding site. 270 to 275 (ACGKTN) is a binding site for GTP. The active site involves cysteine 271. Aspartate 294 is a Mn(2+) binding site. Substrate is bound at residue 384–386 (NSR). GTP is bound by residues arginine 386, arginine 417, and 512-515 (FGEN).

Belongs to the phosphoenolpyruvate carboxykinase [GTP] family. In terms of assembly, monomer. Mn(2+) serves as cofactor.

Its subcellular location is the cytoplasm. It carries out the reaction oxaloacetate + GTP = phosphoenolpyruvate + GDP + CO2. Its pathway is carbohydrate biosynthesis; gluconeogenesis. Catalyzes the conversion of oxaloacetate (OAA) to phosphoenolpyruvate (PEP), the rate-limiting step in the metabolic pathway that produces glucose from lactate and other precursors derived from the citric acid cycle. The sequence is that of Phosphoenolpyruvate carboxykinase [GTP] from Corynebacterium jeikeium (strain K411).